Consider the following 340-residue polypeptide: tRNA N6-adenosine threonylcarbamoyltransferase (340 aa).

The Fe cation site is built by His111 and His115. Residues 133–137 (VVSGG), Asp166, Gly179, Asp183, and Asn272 contribute to the substrate site. Asp300 serves as a coordination point for Fe cation.

It belongs to the KAE1 / TsaD family. Requires Fe(2+) as cofactor.

It is found in the cytoplasm. It catalyses the reaction L-threonylcarbamoyladenylate + adenosine(37) in tRNA = N(6)-L-threonylcarbamoyladenosine(37) in tRNA + AMP + H(+). Functionally, required for the formation of a threonylcarbamoyl group on adenosine at position 37 (t(6)A37) in tRNAs that read codons beginning with adenine. Is involved in the transfer of the threonylcarbamoyl moiety of threonylcarbamoyl-AMP (TC-AMP) to the N6 group of A37, together with TsaE and TsaB. TsaD likely plays a direct catalytic role in this reaction. The chain is tRNA N6-adenosine threonylcarbamoyltransferase from Geobacter sulfurreducens (strain ATCC 51573 / DSM 12127 / PCA).